The primary structure comprises 64 residues: Prokaryotic ubiquitin-like protein Pup (64 aa).

The span at 1 to 11 (MAQEQTKRTGG) shows a compositional bias: basic and acidic residues. The disordered stretch occupies residues 1–38 (MAQEQTKRTGGGDEDDTPGGDGAAGQERREKLAEDTDD). The ARC ATPase binding stretch occupies residues 21-58 (DGAAGQERREKLAEDTDDLLDEIDDVLEENAEDFVRAY). Residues 24 to 52 (AGQERREKLAEDTDDLLDEIDDVLEENAE) adopt a coiled-coil conformation. A Deamidated glutamine modification is found at Gln-64. Gln-64 participates in a covalent cross-link: Isoglutamyl lysine isopeptide (Gln-Lys) (interchain with K-? in acceptor proteins).

The protein belongs to the prokaryotic ubiquitin-like protein family. As to quaternary structure, strongly interacts with the proteasome-associated ATPase ARC through a hydrophobic interface; the interacting region of Pup lies in its C-terminal half. There is one Pup binding site per ARC hexamer ring. Is modified by deamidation of its C-terminal glutamine to glutamate by the deamidase Dop, a prerequisite to the subsequent pupylation process.

The protein operates within protein degradation; proteasomal Pup-dependent pathway. Its function is as follows. Protein modifier that is covalently attached to lysine residues of substrate proteins, thereby targeting them for proteasomal degradation. The tagging system is termed pupylation. This Rhodococcus opacus (strain B4) protein is Prokaryotic ubiquitin-like protein Pup.